Consider the following 562-residue polypeptide: MSSYGGGGYSSRGGGGGYSGGYDRNGGGGGGYSGSNGYSGGGGGYGGGGYGGGGGGYGGGGGGYGGGYGGGGGDRMSNLGAGLQKQNWDLDTLPKFEKSFYQEHPNVAARSQAEVDKFRRDHAMTVAGNNVPSPVETFDEAGFPRYVMDEVKAQGFPAPTAIQSQGWPMALSGRDVVGIAETGSGKTLTYCLPAIVHINAQPLLAPGDGPIVLVLAPTRELAVQIQQEITKFGKSSRIRNTCVYGGVPKGPQTRDLSRGVEVCIATPGRLIDMLESGRTNLRRVTYLVLDEADRMLDMGFEPQIRKIIGQIRPDRQTCMWSATWPKEVRALASDFLTDFIQVNIGSMDLAANHRITQVVEVVNESEKRDKMIKHLEKIMEDKESQNKILIFTGTKRVADEITRFLRQDGWPALSIHGDKQQNERDWVLDQFKTGKSPIMVATDVASRGIDVRNITHVLNYDYPNNSEDYIHRIGRTGRAGAKGTAITFFTTDNSKQARDLVGVLQEAKQHIDPRLAEMVRYGGGGGNSRYGGYRGRGGGGFRGGRSQGANGPNAMPMGNRRW.

Positions 136–164 (ETFDEAGFPRYVMDEVKAQGFPAPTAIQS) match the Q motif motif. In terms of domain architecture, Helicase ATP-binding spans 167–342 (WPMALSGRDV…SDFLTDFIQV (176 aa)). 180-187 (AETGSGKT) serves as a coordination point for ATP. The short motif at 290 to 293 (DEAD) is the DEAD box element. The region spanning 370-519 (KMIKHLEKIM…HIDPRLAEMV (150 aa)) is the Helicase C-terminal domain. A disordered region spans residues 538 to 562 (GGGFRGGRSQGANGPNAMPMGNRRW).

Belongs to the DEAD box helicase family. DDX5/DBP2 subfamily. Associates with polysomes.

It localises to the cytoplasm. Its subcellular location is the nucleus. It catalyses the reaction ATP + H2O = ADP + phosphate + H(+). ATP-dependent RNA helicase involved nonsense-mediated mRNA decay and ribosome biogenesis through rRNA processing. This is ATP-dependent RNA helicase DBP2 (DBP2) from Chaetomium globosum (strain ATCC 6205 / CBS 148.51 / DSM 1962 / NBRC 6347 / NRRL 1970) (Soil fungus).